Consider the following 450-residue polypeptide: MEQDKYLTVAAITKYIEKKFDVDPYMKQVFVRGEISNLKQPASGHLYFTVKDEFAMLRSVMFQKAVQKIGFVPEDGMNVLITGRIGVFTKAGRYQFYAEHMEPDGVGALYIQLEQLKTQLEKEGLFAETHKKVLPSFPSKVAVVTSKTGAAVRDILTTIHRRMPSVEVIVYPTIVQGEKSAQKIVENIGRINQRNDIDVMIIGRGGGSLEELWAFNEEPVVRAVYDSDVPVISAVGHETDFALSDFSADVRAATPTAAAELAVPDYRDLEERLAERKYRLLTVTRQLLERKERTLEQLKQHLILNGPKHQLEQQIERTDYFSERLKNAFSKQVLLKQTMFNRLNDRLHYYHPRKEIELQNEQLAVRKQALEKAMKRQLKDKQQVFVRQIEALEHLSPLALLKRGFGVTYKEGQLVKSVQDLEVGDDIQVKMQGGHIEASITAKEEDTSGN.

This sequence belongs to the XseA family. In terms of assembly, heterooligomer composed of large and small subunits.

The protein resides in the cytoplasm. The catalysed reaction is Exonucleolytic cleavage in either 5'- to 3'- or 3'- to 5'-direction to yield nucleoside 5'-phosphates.. Bidirectionally degrades single-stranded DNA into large acid-insoluble oligonucleotides, which are then degraded further into small acid-soluble oligonucleotides. The sequence is that of Exodeoxyribonuclease 7 large subunit from Listeria welshimeri serovar 6b (strain ATCC 35897 / DSM 20650 / CCUG 15529 / CIP 8149 / NCTC 11857 / SLCC 5334 / V8).